The sequence spans 555 residues: Potassium-transporting ATPase potassium-binding subunit (555 aa).

A run of 10 helical transmembrane segments spans residues 2–22 (IWVA…PTGI), 60–80 (QYAL…YFVF), 130–150 (IGIT…VMAF), 173–193 (VFLP…VPQT), 246–266 (MSNI…PFTY), 278–298 (ILFV…TTSE), 374–394 (AGFV…GLMV), 412–432 (LIAV…ALAL), 483–503 (LVMF…AASL), and 525–545 (GIFI…MLVL).

This sequence belongs to the KdpA family. In terms of assembly, the system is composed of three essential subunits: KdpA, KdpB and KdpC.

Its subcellular location is the cell membrane. In terms of biological role, part of the high-affinity ATP-driven potassium transport (or Kdp) system, which catalyzes the hydrolysis of ATP coupled with the electrogenic transport of potassium into the cytoplasm. This subunit binds the extracellular potassium ions and delivers the ions to the membrane domain of KdpB through an intramembrane tunnel. The chain is Potassium-transporting ATPase potassium-binding subunit from Bacillus cereus (strain ATCC 10987 / NRS 248).